Consider the following 211-residue polypeptide: Ubiquitin-conjugating enzyme E2 S-C (211 aa).

The UBC core domain maps to 11 to 157; it reads HIIRRVYKEV…AKLMTEIHAQ (147 aa). Cys95 functions as the Glycyl thioester intermediate in the catalytic mechanism. Residues 158 to 211 form a disordered region; the sequence is GSTLRGKDPTDPCSSASATVVSGDGPMAKKHAGDRDKKLAAKKKTDKKRALRRL. A compositionally biased stretch (basic residues) spans 197–211; sequence AAKKKTDKKRALRRL.

The protein belongs to the ubiquitin-conjugating enzyme family.

It catalyses the reaction S-ubiquitinyl-[E1 ubiquitin-activating enzyme]-L-cysteine + [E2 ubiquitin-conjugating enzyme]-L-cysteine = [E1 ubiquitin-activating enzyme]-L-cysteine + S-ubiquitinyl-[E2 ubiquitin-conjugating enzyme]-L-cysteine.. The protein operates within protein modification; protein ubiquitination. Functionally, catalyzes the covalent attachment of ubiquitin to other proteins. Acts as an essential factor of the anaphase promoting complex/cyclosome (APC/C), a cell cycle-regulated ubiquitin ligase that controls progression through mitosis. Acts by specifically elongating 'Lys-11'-linked polyubiquitin chains initiated by the E2 enzyme ube2c/ubch10 on APC/C substrates, enhancing the degradation of APC/C substrates by the proteasome and promoting mitotic exit. The protein is Ubiquitin-conjugating enzyme E2 S-C (ube2s-c) of Xenopus laevis (African clawed frog).